Reading from the N-terminus, the 398-residue chain is Elongation factor Tu (398 aa).

A tr-type G domain is found at 10–207 (KPHVNIGTIG…TVDEYIPEPE (198 aa)). The segment at 19 to 26 (GHVDHGKT) is G1. Position 19-26 (19-26 (GHVDHGKT)) interacts with GTP. A Mg(2+)-binding site is contributed by Thr26. The tract at residues 63-67 (GITIN) is G2. Positions 84-87 (DAPG) are G3. Residues 84–88 (DAPGH) and 139–142 (NKVD) contribute to the GTP site. The G4 stretch occupies residues 139–142 (NKVD). The G5 stretch occupies residues 177–179 (SAL).

The protein belongs to the TRAFAC class translation factor GTPase superfamily. Classic translation factor GTPase family. EF-Tu/EF-1A subfamily. As to quaternary structure, monomer.

The protein localises to the cytoplasm. It catalyses the reaction GTP + H2O = GDP + phosphate + H(+). Its function is as follows. GTP hydrolase that promotes the GTP-dependent binding of aminoacyl-tRNA to the A-site of ribosomes during protein biosynthesis. The polypeptide is Elongation factor Tu (Streptococcus suis (strain 98HAH33)).